The chain runs to 430 residues: Ribosomal protein uS12 methylthiotransferase RimO (430 aa).

An MTTase N-terminal domain is found at 2–118; that stretch reads AKIFTISLGC…IDNVIKRPKH (117 aa). [4Fe-4S] cluster-binding residues include cysteine 11, cysteine 47, cysteine 81, cysteine 150, cysteine 154, and cysteine 157. The 233-residue stretch at 136 to 368 folds into the Radical SAM core domain; it reads LTAPHSAYLK…AQSRVIDSIN (233 aa). The TRAM domain maps to 369 to 430; the sequence is RKLKGKTVKV…KGYNRTGKII (62 aa).

It belongs to the methylthiotransferase family. RimO subfamily. The cofactor is [4Fe-4S] cluster.

It localises to the cytoplasm. The catalysed reaction is L-aspartate(89)-[ribosomal protein uS12]-hydrogen + (sulfur carrier)-SH + AH2 + 2 S-adenosyl-L-methionine = 3-methylsulfanyl-L-aspartate(89)-[ribosomal protein uS12]-hydrogen + (sulfur carrier)-H + 5'-deoxyadenosine + L-methionine + A + S-adenosyl-L-homocysteine + 2 H(+). Its function is as follows. Catalyzes the methylthiolation of an aspartic acid residue of ribosomal protein uS12. This Elusimicrobium minutum (strain Pei191) protein is Ribosomal protein uS12 methylthiotransferase RimO.